A 126-amino-acid chain; its full sequence is Large ribosomal subunit protein bL12 (126 aa).

Belongs to the bacterial ribosomal protein bL12 family. In terms of assembly, homodimer. Part of the ribosomal stalk of the 50S ribosomal subunit. Forms a multimeric L10(L12)X complex, where L10 forms an elongated spine to which 2 to 4 L12 dimers bind in a sequential fashion. Binds GTP-bound translation factors.

In terms of biological role, forms part of the ribosomal stalk which helps the ribosome interact with GTP-bound translation factors. Is thus essential for accurate translation. The sequence is that of Large ribosomal subunit protein bL12 from Blochmanniella floridana.